A 152-amino-acid chain; its full sequence is MNEKYVVTWDMLQIHARKLAQRLLPAEQWKGIIAVSRGGLVPAGILARELGIRYVDTVCISSYDHDNQRDLKVLKRAEGDGEGFIVIDDLVDTGGTATAIREMYPKAHFVTIFAKPAGRPLVDDYVVDIPQNTWIEQPWDMAVTFVAPLSGK.

5-phospho-alpha-D-ribose 1-diphosphate is bound by residues Arg37 to Gly38, Arg69, and Asp88 to Thr96. GMP is bound at residue Arg69. Residue Asp89 participates in Mg(2+) binding. Positions 92 and 135 each coordinate guanine. The xanthine site is built by Asp92 and Ile135. Residues Asp92–Thr96 and Trp134–Ile135 each bind GMP.

It belongs to the purine/pyrimidine phosphoribosyltransferase family. XGPT subfamily. Homotetramer. Requires Mg(2+) as cofactor.

It localises to the cell inner membrane. It catalyses the reaction GMP + diphosphate = guanine + 5-phospho-alpha-D-ribose 1-diphosphate. It carries out the reaction XMP + diphosphate = xanthine + 5-phospho-alpha-D-ribose 1-diphosphate. The enzyme catalyses IMP + diphosphate = hypoxanthine + 5-phospho-alpha-D-ribose 1-diphosphate. It participates in purine metabolism; GMP biosynthesis via salvage pathway; GMP from guanine: step 1/1. It functions in the pathway purine metabolism; XMP biosynthesis via salvage pathway; XMP from xanthine: step 1/1. Functionally, purine salvage pathway enzyme that catalyzes the transfer of the ribosyl-5-phosphate group from 5-phospho-alpha-D-ribose 1-diphosphate (PRPP) to the N9 position of the 6-oxopurines guanine and xanthine to form the corresponding ribonucleotides GMP (guanosine 5'-monophosphate) and XMP (xanthosine 5'-monophosphate), with the release of PPi. To a lesser extent, also acts on hypoxanthine. The protein is Xanthine-guanine phosphoribosyltransferase of Yersinia pseudotuberculosis serotype O:1b (strain IP 31758).